The sequence spans 372 residues: Ribosomal RNA small subunit methyltransferase H (372 aa).

Residues 78 to 80 (GGH), Asp97, Tyr124, Asp148, and Gln155 each bind S-adenosyl-L-methionine.

This sequence belongs to the methyltransferase superfamily. RsmH family.

It localises to the cytoplasm. It catalyses the reaction cytidine(1402) in 16S rRNA + S-adenosyl-L-methionine = N(4)-methylcytidine(1402) in 16S rRNA + S-adenosyl-L-homocysteine + H(+). Its function is as follows. Specifically methylates the N4 position of cytidine in position 1402 (C1402) of 16S rRNA. The sequence is that of Ribosomal RNA small subunit methyltransferase H from Mycobacterium leprae (strain Br4923).